Consider the following 380-residue polypeptide: tRNA(Met) cytidine acetate ligase (380 aa).

ATP-binding positions include 7–20 (ITEY…HLYH), G100, N153, and R178.

It belongs to the TmcAL family.

The protein resides in the cytoplasm. It catalyses the reaction cytidine(34) in elongator tRNA(Met) + acetate + ATP = N(4)-acetylcytidine(34) in elongator tRNA(Met) + AMP + diphosphate. Catalyzes the formation of N(4)-acetylcytidine (ac(4)C) at the wobble position of elongator tRNA(Met), using acetate and ATP as substrates. First activates an acetate ion to form acetyladenylate (Ac-AMP) and then transfers the acetyl group to tRNA to form ac(4)C34. The polypeptide is tRNA(Met) cytidine acetate ligase (Staphylococcus haemolyticus (strain JCSC1435)).